Here is a 1178-residue protein sequence, read N- to C-terminus: MFELNNFDALQIGLASPEKIREWSRGEVKKPETINYRTLKPERDGLFCERIFGPMKDWECHCGKYKRIRYKGIVCDRCGVEVTKAKVRRERMGHIELAAPVSHIWYFKGIPSRMGLILDMSPRALEKVLYFASYVVLDPKETPLLKKQLLNEKEYRESIDKYGDDSFVAAMGAEAVKTLLDEIDLEQSSIELKEELKTSTGQKKIRIIRRLEVVESFRKSGNRPDWMVIDVIPVIPPDLRPMVQLDGGRFATSDLNDLYRRVINRNNRLKKLLDLGAPDIIVRNEKRMLQEAVDALIDNGRRGRPVTGPGNRPLKSLSDMLKGKQGRFRQNLLGKRVDYSGRSVIVVGPELKMYQCGLPKEMALELFKPFVMKKLVQNGLAHNIKSAKRMVERVQPQVWDVLEEVISDHPVLLNRAPTLHRLGIQAFQPVLVEGRAIKLHPLVCTAYNADFDGDQMAVHVPLSVEAQAEARFLMLAAHNILKPSDGKPVSVPTQDMVLGSYYLTMDKDGVKGEGKVFSCPEEVLMAYQCKAVDIHAKIKVRLKKVIDGETIEGIIETTPGKIIFNESIPQDLGYIDRTVPENKLKLEVDFLVSKKTLGGIINRCYMKHGATKTSIMLDKIKAKGYHYSTIGAITISTSDMVVPEAKRELLQNTEKQVEKIQKMYRRGFISEEERYEKVIDLWTKTTEDVANALMASLDSFNPIYMMADSGARGSKSQIKQLAGMRGLMANPSGKIIELPIKASFREGLDVLEYFISTHGARKGNADTALKTADSGYLTRRLVDVSQDVIVRQEDCGTEEGYEVSEIKEGNEVIEPLVERLSGRYPSEDIINPTTGEVIVKRNTYMNEDIAKKVSDAGIKKVKIRSVFTCKSKHGVCARCYGMNMATSQKIHIGEAVGIVAAQSIGEPGTQLTMRTFHTGGVAGADITQGLPRVEELFEARKPKGLAIVSEVSGTVKMEETKKKRTIIVVTDDGEEVSYDIPFGSRIKVKNGDIISAGDEITEGSINPHDILRIKGVDGVKNYLLSEVQKVYRLQGVDINDKHLEVVIRQMTRKIKIEDSGDTELLPGTMIDVFDFEEANREILEKGGEPAVGRIALLGITKAALATDSFLSAASFQETTRVLTDAAIKGKIDPLLGLKENVIIGKLIPAGTGMTRYRSIQINTDDENIEEDSMDSIEV.

Zn(2+)-binding residues include Cys60, Cys62, Cys75, and Cys78. Asp450, Asp452, and Asp454 together coordinate Mg(2+). Cys795, Cys869, Cys876, and Cys879 together coordinate Zn(2+).

Belongs to the RNA polymerase beta' chain family. As to quaternary structure, the RNAP catalytic core consists of 2 alpha, 1 beta, 1 beta' and 1 omega subunit. When a sigma factor is associated with the core the holoenzyme is formed, which can initiate transcription. It depends on Mg(2+) as a cofactor. The cofactor is Zn(2+).

The enzyme catalyses RNA(n) + a ribonucleoside 5'-triphosphate = RNA(n+1) + diphosphate. DNA-dependent RNA polymerase catalyzes the transcription of DNA into RNA using the four ribonucleoside triphosphates as substrates. The protein is DNA-directed RNA polymerase subunit beta' of Clostridium botulinum (strain ATCC 19397 / Type A).